The chain runs to 110 residues: Insulin (110 aa).

A signal peptide spans 1 to 24; it reads MALWMRLLPLLALLALWGPDPAQA. 3 disulfide bridges follow: Cys-31-Cys-96, Cys-43-Cys-109, and Cys-95-Cys-100. A propeptide spans 57–87 (c peptide); sequence EAEDLQVGQVELGGGPGAGSLQPLALEGSLQ.

It belongs to the insulin family. Heterodimer of a B chain and an A chain linked by two disulfide bonds.

It is found in the secreted. Its function is as follows. Insulin decreases blood glucose concentration. It increases cell permeability to monosaccharides, amino acids and fatty acids. It accelerates glycolysis, the pentose phosphate cycle, and glycogen synthesis in liver. The protein is Insulin (INS) of Pongo pygmaeus (Bornean orangutan).